Here is a 110-residue protein sequence, read N- to C-terminus: MEVKASLKYARVGAQKARLVADLVRGKDVNEAVKTLTFLNKKTAGMVKKLIESAVANAEYKKVMDVDSLYVKAIWVDQGPVLKRFRPRAQGRAFGVRKKTSHINVVLEEK.

The protein belongs to the universal ribosomal protein uL22 family. Part of the 50S ribosomal subunit.

Functionally, this protein binds specifically to 23S rRNA; its binding is stimulated by other ribosomal proteins, e.g. L4, L17, and L20. It is important during the early stages of 50S assembly. It makes multiple contacts with different domains of the 23S rRNA in the assembled 50S subunit and ribosome. In terms of biological role, the globular domain of the protein is located near the polypeptide exit tunnel on the outside of the subunit, while an extended beta-hairpin is found that lines the wall of the exit tunnel in the center of the 70S ribosome. This is Large ribosomal subunit protein uL22 from Bdellovibrio bacteriovorus (strain ATCC 15356 / DSM 50701 / NCIMB 9529 / HD100).